The chain runs to 70 residues: Bowman-Birk type proteinase inhibitor A7 (70 aa).

Cystine bridges form between cysteine 12-cysteine 31, cysteine 18-cysteine 29, cysteine 38-cysteine 45, and cysteine 42-cysteine 59.

The protein belongs to the Bowman-Birk serine protease inhibitor family. As to expression, expressed in bulb (at protein level).

Its function is as follows. Serine protease inhibitor. Strongly inhibits trypsin (Ki = 7.1 nM) and almost completely inhibits elastase. Also inhibits chymotrypsin (Ki = 19 nM). Does not inhibit bacterial subtilisin. The sequence is that of Bowman-Birk type proteinase inhibitor A7 from Hyacinthus orientalis (Common hyacinth).